A 202-amino-acid chain; its full sequence is Tetranectin (202 aa).

The signal sequence occupies residues 1 to 21 (MGFWGTYLLFCLFSFLSQLTA). 3 cysteine pairs are disulfide-bonded: cysteine 71/cysteine 81, cysteine 98/cysteine 197, and cysteine 173/cysteine 189. Positions 77–198 (VNLKCLLAFT…CRDQLPYICQ (122 aa)) constitute a C-type lectin domain.

In terms of assembly, homotrimer. As to expression, highest expression in lung, skeletal muscle and heart. Expressed in retina.

It is found in the secreted. Functionally, tetranectin binds to plasminogen and to isolated kringle 4. May be involved in the packaging of molecules destined for exocytosis. Plays a role in retinal function. This Mus musculus (Mouse) protein is Tetranectin (Clec3b).